The chain runs to 159 residues: NADH-quinone oxidoreductase subunit I (159 aa).

4Fe-4S ferredoxin-type domains are found at residues 51–80 (RRYE…IEAD) and 90–119 (TRYD…EGPN). [4Fe-4S] cluster is bound by residues Cys-60, Cys-63, Cys-66, Cys-70, Cys-99, Cys-102, Cys-105, and Cys-109.

This sequence belongs to the complex I 23 kDa subunit family. In terms of assembly, NDH-1 is composed of 14 different subunits. Subunits NuoA, H, J, K, L, M, N constitute the membrane sector of the complex. [4Fe-4S] cluster serves as cofactor.

The protein localises to the cell inner membrane. It catalyses the reaction a quinone + NADH + 5 H(+)(in) = a quinol + NAD(+) + 4 H(+)(out). Functionally, NDH-1 shuttles electrons from NADH, via FMN and iron-sulfur (Fe-S) centers, to quinones in the respiratory chain. The immediate electron acceptor for the enzyme in this species is believed to be ubiquinone. Couples the redox reaction to proton translocation (for every two electrons transferred, four hydrogen ions are translocated across the cytoplasmic membrane), and thus conserves the redox energy in a proton gradient. The sequence is that of NADH-quinone oxidoreductase subunit I from Rickettsia massiliae (strain Mtu5).